A 1732-amino-acid polypeptide reads, in one-letter code: Transient receptor potential cation channel subfamily M member 3 (1732 aa).

The Cytoplasmic portion of the chain corresponds to 1-894 (MPEPWGTVYF…RKIYEFYNAP (894 aa)). Calmodulin-binding stretches follow at residues 192-215 (NFEL…MTTG), 300-323 (TGKY…QKIN), 601-624 (RKRF…KLLG), and 793-816 (RKNS…LEFK). A required for the inhibitory action of G-beta/gamma-subunits of heterotrimeric G-proteins region spans residues 617–625 (PKALKLLGM). Ser-796 provides a ligand contact to 1,2-dioctanoyl-sn-glycero-3-phospho-(1D-myo-inositol-4,5-bisphosphate). The chain crosses the membrane as a helical span at residues 895–918 (IVKFWFYTLAYIGYLMLFNYIVLV). Residues 919–925 (KMERWPS) are Extracellular-facing. The chain crosses the membrane as a helical span at residues 926-948 (TQEWIVISYIFTLGIEKMREILM). Over 949–964 (SEPGKLLQKVKVWLQE) the chain is Cytoplasmic. A helical membrane pass occupies residues 965–985 (YWNVTDLIAILLFSVGMILRL). Residues 986–989 (QDQP) are Extracellular-facing. A helical membrane pass occupies residues 990–1013 (FRSDGRVIYCVNIIYWYIRLLDIF). At 1014–1028 (GVNKYLGPYVMMIGK) the chain is on the cytoplasmic side. Residues Lys-1017 and Tyr-1018 each contribute to the 1,2-dioctanoyl-sn-glycero-3-phospho-(1D-myo-inositol-4,5-bisphosphate) site. The chain crosses the membrane as a helical span at residues 1029–1056 (MMIDMMYFVIIMLVVLMSFGVARQAILF). At 1057–1111 (PNEEPSWKLAKNIFYMPYWMIYGEVFADQIDPPCGQNETREDGKIIQLPPCKTGA) the chain is on the extracellular side. A helical transmembrane segment spans residues 1112-1137 (WIVPAIMACYLLVANILLVNLLIAVF). Residues 1138–1732 (NNTFFEVKSI…AFQSFESKHN (595 aa)) are Cytoplasmic-facing. Positions 1241-1301 (ERIRVTSERV…LERLTGLERA (61 aa)) form a coiled coil. A compositionally biased stretch (low complexity) spans 1459-1476 (PVPSTAPSSSAYATLAPT). 2 disordered regions span residues 1459–1478 (PVPS…PTDR) and 1611–1732 (REAE…SKHN). Polar residues-rich tracts occupy residues 1635 to 1653 (AISS…NNIT), 1690 to 1701 (NTASLRNPFQRS), and 1720 to 1732 (RTSA…SKHN).

Belongs to the transient receptor (TC 1.A.4) family. LTrpC subfamily. TRPM3 sub-subfamily. Homotetramer. Interacts with TRPM1; the interaction results in the formation of a heteromultimeric cation channel complex that are functionally different from the homomeric channels. In terms of tissue distribution, expressed primarily in the kidney and, at lower levels, in brain, testis, ovary, pancreas and spinal cord. Expression in the brain and kidney was determined at protein level. In the kidney, expressed predominantly in the collecting tubular epithelium in the medulla, medullary rays, and periglomerular regions; in the brain, highest levels are found in the cerebellum, choroid plexus, the locus coeruleus, the posterior thalamus and the substantia nigra. Down-regulated in renal tumors compared to normal kidney. Expressed in the lens.

It localises to the cell membrane. It carries out the reaction Ca(2+)(in) = Ca(2+)(out). The catalysed reaction is Mn(2+)(in) = Mn(2+)(out). It catalyses the reaction Zn(2+)(in) = Zn(2+)(out). The enzyme catalyses Mg(2+)(in) = Mg(2+)(out). Activated by the neurosteroid pregnelonone sulfate (PregS); PregS activates the channel by shifting its current-voltage activation curve toward more negative membrane potentials and also potentiates temperature-induced activation. Activated by sphingosine. Activated by heat. Intracellular Ca(2+) inhibits TRPM3 probably via interaction with Ca(2+)/calmodulin. Intracellular Mg(2+) inhibits TRPM3 activity. Both intracellular and extracellular protons block TRPM3 through propable binding sites in the pore region. Positively regulated by phosphoinositide phosphoinositol 4,5-biphosphate (PI(4,5)P2). Strongly inhibited by activation of G(i)-coupled receptors via direct binding with G-betagamma-subunits of heterotrimeric G-proteins. Its function is as follows. Constitutively active, non-selective divalent cation-conducting channel that is permeable to Ca(2+), Mn(2+), and Mg(2+), with a high permeability for Ca(2+). However, can be enhanced by increasing temperature and by ligands, including the endogenous neurosteroid pregnenolone sulfate and sphingosine-1 and suppressed by intracellular Mg(2+). Implicated in a variety of cellular processes, including insulin/peptide secretion, vascular constriction and dilation, noxious heat sensing, inflammatory and spontaneous pain sensitivity. In neurons of the dorsal root ganglia, functions as thermosensitive channel for the detection of noxious heat and spontaneous pain. Suggested to function as an ionotropic steroid receptor in beta-cell, indeed pregnenolone sulfate leads to Ca(2+) influx and enhanced insulin secretion. Mediates Zn(2+) uptake into the lumen of pancreatic beta cell secretory granules, thereby regulating insulin secretion. Forms heteromultimeric ion channels with TRPM1 which are permeable for Ca(2+) and Zn(2+) ions. Exists as multiple splice variants which differ significantly in their biophysical properties. In Homo sapiens (Human), this protein is Transient receptor potential cation channel subfamily M member 3.